The following is a 513-amino-acid chain: ATP synthase subunit alpha (513 aa).

169–176 provides a ligand contact to ATP; the sequence is GDRQVGKT.

It belongs to the ATPase alpha/beta chains family. As to quaternary structure, F-type ATPases have 2 components, CF(1) - the catalytic core - and CF(0) - the membrane proton channel. CF(1) has five subunits: alpha(3), beta(3), gamma(1), delta(1), epsilon(1). CF(0) has three main subunits: a(1), b(2) and c(9-12). The alpha and beta chains form an alternating ring which encloses part of the gamma chain. CF(1) is attached to CF(0) by a central stalk formed by the gamma and epsilon chains, while a peripheral stalk is formed by the delta and b chains.

It localises to the cell inner membrane. The enzyme catalyses ATP + H2O + 4 H(+)(in) = ADP + phosphate + 5 H(+)(out). In terms of biological role, produces ATP from ADP in the presence of a proton gradient across the membrane. The alpha chain is a regulatory subunit. The protein is ATP synthase subunit alpha of Aeromonas salmonicida (strain A449).